The sequence spans 75 residues: MPHIDIKCFPRELDEQQKAALAADITDVIIRHLNSKDSSISIALQQIQPESWQAIWDAEIEPQMEALIKKPGYSM.

Proline 2 functions as the Proton acceptor; via imino nitrogen in the catalytic mechanism.

The protein belongs to the 4-oxalocrotonate tautomerase family. PptA subfamily. In terms of assembly, homodimer.

The protein localises to the cytoplasm. The sequence is that of Tautomerase PptA from Shigella sonnei (strain Ss046).